The following is a 433-amino-acid chain: Aspartate--tRNA(Asp/Asn) ligase (433 aa).

E167 is a binding site for L-aspartate. The tract at residues 189-192 (QLFK) is aspartate. R211 contributes to the L-aspartate binding site. ATP contacts are provided by residues 211–213 (RAE), 219–221 (RHL), and E356. The Mg(2+) site is built by E356 and S359. S359 and R363 together coordinate L-aspartate. An ATP-binding site is contributed by 404 to 407 (GGER).

This sequence belongs to the class-II aminoacyl-tRNA synthetase family. Type 2 subfamily. Homodimer. Requires Mg(2+) as cofactor.

It is found in the cytoplasm. The catalysed reaction is tRNA(Asx) + L-aspartate + ATP = L-aspartyl-tRNA(Asx) + AMP + diphosphate. Aspartyl-tRNA synthetase with relaxed tRNA specificity since it is able to aspartylate not only its cognate tRNA(Asp) but also tRNA(Asn). Reaction proceeds in two steps: L-aspartate is first activated by ATP to form Asp-AMP and then transferred to the acceptor end of tRNA(Asp/Asn). In Natronomonas pharaonis (strain ATCC 35678 / DSM 2160 / CIP 103997 / JCM 8858 / NBRC 14720 / NCIMB 2260 / Gabara) (Halobacterium pharaonis), this protein is Aspartate--tRNA(Asp/Asn) ligase.